Reading from the N-terminus, the 88-residue chain is Cell division topological specificity factor (88 aa).

The protein belongs to the MinE family.

Prevents the cell division inhibition by proteins MinC and MinD at internal division sites while permitting inhibition at polar sites. This ensures cell division at the proper site by restricting the formation of a division septum at the midpoint of the long axis of the cell. The protein is Cell division topological specificity factor of Paracidovorax citrulli (strain AAC00-1) (Acidovorax citrulli).